A 384-amino-acid chain; its full sequence is Cell division protein FtsZ (384 aa).

GTP is bound by residues 20-24, 107-109, Glu138, Arg142, and Asn186; these read GGGGN and GTG.

This sequence belongs to the FtsZ family. Homodimer. Polymerizes to form a dynamic ring structure in a strictly GTP-dependent manner. Interacts directly with several other division proteins.

It localises to the cytoplasm. Its function is as follows. Essential cell division protein that forms a contractile ring structure (Z ring) at the future cell division site. The regulation of the ring assembly controls the timing and the location of cell division. One of the functions of the FtsZ ring is to recruit other cell division proteins to the septum to produce a new cell wall between the dividing cells. Binds GTP and shows GTPase activity. This Wigglesworthia glossinidia brevipalpis protein is Cell division protein FtsZ.